Consider the following 264-residue polypeptide: General transcription factor IIF subunit 2 (264 aa).

The protein belongs to the TFIIF beta subunit family. In terms of assembly, heterodimer of an alpha and a beta subunit.

It is found in the nucleus. In terms of biological role, TFIIF is a general transcription initiation factor that binds to RNA polymerase II and helps to recruit it to the initiation complex in collaboration with TFIIB. This Xenopus laevis (African clawed frog) protein is General transcription factor IIF subunit 2 (gtf2f2).